The sequence spans 158 residues: ATP synthase subunit beta, mitochondrial (158 aa).

It belongs to the ATPase alpha/beta chains family. F-type ATPases have 2 components, CF(1) - the catalytic core - and CF(0) - the membrane proton channel. CF(1) has five subunits: alpha(3), beta(3), gamma(1), delta(1), epsilon(1). CF(0) has three main subunits: a, b and c.

It is found in the mitochondrion. Its subcellular location is the mitochondrion inner membrane. It catalyses the reaction ATP + H2O + 4 H(+)(in) = ADP + phosphate + 5 H(+)(out). Functionally, mitochondrial membrane ATP synthase (F(1)F(0) ATP synthase or Complex V) produces ATP from ADP in the presence of a proton gradient across the membrane which is generated by electron transport complexes of the respiratory chain. F-type ATPases consist of two structural domains, F(1) - containing the extramembraneous catalytic core, and F(0) - containing the membrane proton channel, linked together by a central stalk and a peripheral stalk. During catalysis, ATP synthesis in the catalytic domain of F(1) is coupled via a rotary mechanism of the central stalk subunits to proton translocation. Subunits alpha and beta form the catalytic core in F(1). Rotation of the central stalk against the surrounding alpha(3)beta(3) subunits leads to hydrolysis of ATP in three separate catalytic sites on the beta subunits. The polypeptide is ATP synthase subunit beta, mitochondrial (Schizaphis graminum (Green bug aphid)).